A 129-amino-acid polypeptide reads, in one-letter code: D-ribose pyranase (129 aa).

The Proton donor role is filled by H20. Substrate is bound by residues D28, H96, and Y118–N120.

This sequence belongs to the RbsD / FucU family. RbsD subfamily. Homodecamer.

Its subcellular location is the cytoplasm. It catalyses the reaction beta-D-ribopyranose = beta-D-ribofuranose. Its pathway is carbohydrate metabolism; D-ribose degradation; D-ribose 5-phosphate from beta-D-ribopyranose: step 1/2. Functionally, catalyzes the interconversion of beta-pyran and beta-furan forms of D-ribose. In Exiguobacterium sibiricum (strain DSM 17290 / CCUG 55495 / CIP 109462 / JCM 13490 / 255-15), this protein is D-ribose pyranase.